Reading from the N-terminus, the 637-residue chain is Biosynthetic arginine decarboxylase (637 aa).

The residue at position 110 (Lys110) is an N6-(pyridoxal phosphate)lysine. Residue 290–300 (IDVGGGLGVDY) participates in substrate binding.

The protein belongs to the Orn/Lys/Arg decarboxylase class-II family. SpeA subfamily. Requires Mg(2+) as cofactor. Pyridoxal 5'-phosphate is required as a cofactor.

The enzyme catalyses L-arginine + H(+) = agmatine + CO2. Functionally, catalyzes the biosynthesis of agmatine from arginine. The polypeptide is Biosynthetic arginine decarboxylase (Pseudomonas putida (strain ATCC 47054 / DSM 6125 / CFBP 8728 / NCIMB 11950 / KT2440)).